The chain runs to 316 residues: tRNA dimethylallyltransferase (316 aa).

Position 17 to 24 (17 to 24 (GPTASGKT)) interacts with ATP. Residue 19–24 (TASGKT) participates in substrate binding. 3 interaction with substrate tRNA regions span residues 42–45 (DSAL), 166–170 (QRLSR), and 247–252 (RCVGYR).

It belongs to the IPP transferase family. In terms of assembly, monomer. Mg(2+) serves as cofactor.

It catalyses the reaction adenosine(37) in tRNA + dimethylallyl diphosphate = N(6)-dimethylallyladenosine(37) in tRNA + diphosphate. In terms of biological role, catalyzes the transfer of a dimethylallyl group onto the adenine at position 37 in tRNAs that read codons beginning with uridine, leading to the formation of N6-(dimethylallyl)adenosine (i(6)A). This is tRNA dimethylallyltransferase from Salmonella paratyphi C (strain RKS4594).